A 323-amino-acid chain; its full sequence is Cyclin-D5-1 (323 aa).

Disordered regions lie at residues 17–36 (ESSL…KQEP) and 281–323 (HMTP…MRRL).

It belongs to the cyclin family. Cyclin D subfamily.

The sequence is that of Cyclin-D5-1 (CYCD5-1) from Arabidopsis thaliana (Mouse-ear cress).